The primary structure comprises 142 residues: Small ribosomal subunit protein eS6 (142 aa).

Residues 117–142 (EKPLDELAPKKEKKEGAAGGRAPAKK) form a disordered region. Positions 118-132 (KPLDELAPKKEKKEG) are enriched in basic and acidic residues.

It belongs to the eukaryotic ribosomal protein eS6 family.

The polypeptide is Small ribosomal subunit protein eS6 (Methanocella arvoryzae (strain DSM 22066 / NBRC 105507 / MRE50)).